A 532-amino-acid chain; its full sequence is MGKKVAIIGAGVSGLASIRSCLEEGLEPTCFEKSNDIGGLWKFSDHAEEGRASIYKSVFTNSSKEMMCFPDFPYPDDFPNFMHNSKIQEYLTAFAKEKSLLKYIQFKTFVSSVNKRPDFATTGQWDVTTERDGKRESAVFDAVMVCSGHHVYPNLPKESFPGLNHFKGKCFHSRDYKEPGVFKGKRVLVVGLGNSGCDIATELSHTAEQVVISSRSGSWVMSRVWDNGYPWDMVLITRFGTFLKNNLPTAISDWLYMKQMNARFKHENYGLMPLNGVLRKEPVFNDELPACILCGIVSVKPNVKKFTETSAIFEDGTTFEGIDCVIFATGYSYTYTFLDESIIKNRNNEIILFKGVFPPLLEKSTIAVIGFVQSLGAAIPTVDLQSRWAARVIKGTCTLPSMEDMMNDINEKMERKHKWYGKSETLQTDYIVYMDELSSFIGVKPNIPWLFLTDPKLAMEVYFGPCSPYQFRLVGPGKWPGARNAILTQWDRSLKPLQTRVVGRLQKPCFFFHWLKPFAIPILLIAVFLGLT.

FAD-binding positions include 9–13 (GAGVS), Glu32, 40–41 (LW), and 61–62 (NS). Residues 60–61 (TN) and 195–198 (SGCD) contribute to the NADP(+) site. Ser401 is modified (phosphoserine). A helical transmembrane segment spans residues 510–530 (FFFHWLKPFAIPILLIAVFLG).

It belongs to the FMO family. FAD is required as a cofactor. In terms of tissue distribution, liver.

The protein localises to the microsome membrane. The protein resides in the endoplasmic reticulum membrane. It carries out the reaction trimethylamine + NADPH + O2 = trimethylamine N-oxide + NADP(+) + H2O. It catalyses the reaction N,N-dimethylaniline + NADPH + O2 + H(+) = N,N-dimethylaniline N-oxide + NADP(+) + H2O. The enzyme catalyses hypotaurine + NADPH + O2 + H(+) = taurine + NADP(+) + H2O. The catalysed reaction is (S)-nicotine + NADPH + O2 = trans-(S)-nicotine N(1')-oxide + NADP(+) + H2O. It carries out the reaction albendazole + NADPH + O2 + H(+) = albendazole S-oxide + NADP(+) + H2O. Functionally, essential hepatic enzyme that catalyzes the oxygenation of a wide variety of nitrogen- and sulfur-containing compounds including drugs as well as dietary compounds. Plays an important role in the metabolism of trimethylamine (TMA), via the production of trimethylamine N-oxide (TMAO) metabolite. TMA is generated by the action of gut microbiota using dietary precursors such as choline, choline containing compounds, betaine or L-carnitine. By regulating TMAO concentration, FMO3 directly impacts both platelet responsiveness and rate of thrombus formation. The sequence is that of Flavin-containing monooxygenase 3 (FMO3) from Macaca mulatta (Rhesus macaque).